Here is a 382-residue protein sequence, read N- to C-terminus: tRNA-queuosine alpha-mannosyltransferase (382 aa).

It belongs to the glycosyltransferase group 1 family. Glycosyltransferase 4 subfamily.

It localises to the cytoplasm. The protein localises to the nucleus. The catalysed reaction is queuosine(34) in tRNA(Asp) + GDP-alpha-D-mannose = O-4''-alpha-D-mannosylqueuosine(34) in tRNA(Asp) + GDP + H(+). Functionally, glycosyltransferase that specifically catalyzes mannosylation of cytoplasmic tRNA(Asp) modified with queuosine at position 34 (queuosine(34)). Mannosylates the cyclopentene moiety of queuosine(34) in tRNA(Asp) to form mannosyl-queuosine(34). Mannosylation of queuosine(34) in tRNA(Asp) is required to slow-down elongation at cognate codons, GAC and GAU, thereby regulating protein translation. The chain is tRNA-queuosine alpha-mannosyltransferase (GTDC1) from Gallus gallus (Chicken).